The primary structure comprises 316 residues: Na(+)-translocating NADH-quinone reductase subunit C (316 aa).

The chain crosses the membrane as a helical span at residues W13–V33. Residue T280 is modified to FMN phosphoryl threonine.

It belongs to the NqrC family. Composed of six subunits; NqrA, NqrB, NqrC, NqrD, NqrE and NqrF. It depends on FMN as a cofactor.

It localises to the cell inner membrane. The enzyme catalyses a ubiquinone + n Na(+)(in) + NADH + H(+) = a ubiquinol + n Na(+)(out) + NAD(+). Its function is as follows. NQR complex catalyzes the reduction of ubiquinone-1 to ubiquinol by two successive reactions, coupled with the transport of Na(+) ions from the cytoplasm to the periplasm. NqrA to NqrE are probably involved in the second step, the conversion of ubisemiquinone to ubiquinol. This Chlamydia trachomatis serovar D (strain ATCC VR-885 / DSM 19411 / UW-3/Cx) protein is Na(+)-translocating NADH-quinone reductase subunit C.